A 204-amino-acid polypeptide reads, in one-letter code: Ribonuclease HII (204 aa).

The region spanning 14–203 (VGLCGVDEAG…VRLLLDQTSL (190 aa)) is the RNase H type-2 domain. The a divalent metal cation site is built by Asp20, Glu21, and Asp112.

The protein belongs to the RNase HII family. It depends on Mn(2+) as a cofactor. Requires Mg(2+) as cofactor.

The protein localises to the cytoplasm. The enzyme catalyses Endonucleolytic cleavage to 5'-phosphomonoester.. Its function is as follows. Endonuclease that specifically degrades the RNA of RNA-DNA hybrids. This Thiobacillus denitrificans (strain ATCC 25259 / T1) protein is Ribonuclease HII.